The primary structure comprises 333 residues: Ribosome biogenesis regulatory protein homolog (333 aa).

Disordered stretches follow at residues 227-248 (KANV…VSGE) and 271-333 (AAAV…ARKG). Positions 278-295 (LREKKEKSERKGAKDQTR) are enriched in basic and acidic residues. Residues 324–333 (GANKAKARKG) are compositionally biased toward basic residues.

The protein belongs to the RRS1 family.

Its subcellular location is the nucleus. The protein resides in the nucleolus. Functionally, involved in ribosomal large subunit assembly. The protein is Ribosome biogenesis regulatory protein homolog of Caenorhabditis elegans.